A 364-amino-acid polypeptide reads, in one-letter code: MDETTREMFSPHNLPLEMMEEILLRLPVKSLTRFKCVCSSWRSLISETLFALKHALILETSKATTSTKSPYGVITTSRYHLKSCCIHSLYNASTVYVSEHDGELLGRDYYQVVGTCHGLVCFHVDYDKSLYLWNPTIKLQQRLSSSDLETSDDECVVTYGFGYDESEDDYKVVALLQQRHQVKIETKIYSTRQKLWRSNTSFPSGVVVADKSRSGIYINGTLNWAATSSSSSWTIISYDMSRDEFKELPGPVCCGRGCFTMTLGDLRGCLSMVCYCKGANADVWVMKEFGEVYSWSKLLSIPGLTDFVRPLWISDGLVVLLEFRSGLALYNCSNGRFHYPVSNSISGCRDAKVYLKTMVSPNDL.

The F-box domain maps to M8 to H54. 2 Kelch repeats span residues D169–G215 and I216–D265.

This is F-box/kelch-repeat protein At3g23880 from Arabidopsis thaliana (Mouse-ear cress).